The sequence spans 869 residues: Phosphatidylethanolamine N-methyltransferase (869 aa).

At serine 2 the chain carries N-acetylserine. At 2-55 (SSCKTTLSEMVGSVTKDRGTINVEARTRSSNVTFKPPVTHDMVRSLFDPTLKKS) the chain is on the lumenal side. A helical membrane pass occupies residues 56-76 (LLEKCIALAIISNFFICYWVF). Over 77 to 86 (QRFGLQFTKY) the chain is Cytoplasmic. Residues 87–107 (FFLVQYLFWRIAYNLGIGLVL) traverse the membrane as a helical segment. Residues 108 to 187 (HYQSHYETLT…EINVWLIFRQ (80 aa)) lie on the Lumenal side of the membrane. The chain crosses the membrane as a helical span at residues 188–208 (FVDLILMQDFVTYIIYVYLSI). At 209 to 212 (PYSW) the chain is on the cytoplasmic side. Residues 213–233 (VQIFNWRSLLGVILILFNIWV) traverse the membrane as a helical segment. The Lumenal portion of the chain corresponds to 234-258 (KLDAHRVVKDYAWYWGDFFFLEESE). Residues 259–279 (LIFDGVFNISPHPMYSIGYLG) traverse the membrane as a helical segment. The Cytoplasmic portion of the chain corresponds to 280–291 (YYGLSLICNDYK). A helical membrane pass occupies residues 292–310 (VLLVSVFGHYSQFLFLKYV). The Lumenal portion of the chain corresponds to 311 to 362 (ENPHIERTYGDGTDSDSQMNSRIDDLISKENYDYSRPLINMGLSFNNFNKLR). Residues 363 to 383 (FTDYFTIGTVAALMLGTIMNA) form a helical membrane-spanning segment. Residues 384 to 389 (RFINLN) are Cytoplasmic-facing. A helical transmembrane segment spans residues 390–410 (YLFITVFVTKLVSWLFISTIL). The Lumenal segment spans residues 411–439 (YKQSQSKWFTRLFLENGYTQVYSYEQWQF). A helical transmembrane segment spans residues 440–460 (IYNYYLVLTYTLMIIHTGLQI). Over 461–463 (WSN) the chain is Cytoplasmic. A helical membrane pass occupies residues 464–484 (FSNINNSQLIFGLILVALQTW). The Lumenal portion of the chain corresponds to 485–534 (CDKETRLAISDFGWFYGDFFLSNYISTRKLTSQGIYRYLNHPEAVLGVVG). Residues 535-555 (VWGTVLMTNFAVTNIILAVLW) form a helical membrane-spanning segment. Residues 556 to 869 (TLTNFILVKF…DIKQTLDSLA (314 aa)) lie on the Cytoplasmic side of the membrane.

This sequence belongs to the class VI-like SAM-binding methyltransferase superfamily. CHO2 family.

Its subcellular location is the endoplasmic reticulum membrane. It carries out the reaction a 1,2-diacyl-sn-glycero-3-phosphoethanolamine + S-adenosyl-L-methionine = a 1,2-diacyl-sn-glycero-3-phospho-N-methylethanolamine + S-adenosyl-L-homocysteine + H(+). It participates in phospholipid metabolism; phosphatidylcholine biosynthesis. Its function is as follows. Catalyzes the first step of the methylation pathway of phosphatidylcholine biosynthesis, the SAM-dependent methylation of phosphatidylethanolamine (PE) to phosphatidylmonomethylethanolamine (PMME). Preferentially converts di-C16:1 substrates. The protein is Phosphatidylethanolamine N-methyltransferase of Saccharomyces cerevisiae (strain ATCC 204508 / S288c) (Baker's yeast).